Consider the following 583-residue polypeptide: cAMP-dependent protein kinase catalytic subunit 3 (583 aa).

2 disordered regions span residues 51-75 and 98-264; these read ATPT…TIGK and SGTA…QTAK. Polar residues-rich tracts occupy residues 52–69 and 98–107; these read TPTQ…TGTP and SGTAGSTSKL. Low complexity predominate over residues 108–162; the sequence is TTGNGSGNTMTSAYKIPSNNSTTANDSSNTETTFTFKLGRSNGRSSSNVASSESS. A compositionally biased stretch (acidic residues) spans 163–176; sequence DPLESDYSEEDPEQ. Residues 181-200 show a composition bias toward low complexity; it reads PDPATNSRSSSTATTTTTSS. Positions 205–219 are enriched in acidic residues; the sequence is NDVDEEDEEDDENEG. The span at 221 to 234 shows a compositional bias: basic and acidic residues; that stretch reads GNGRDADDATHDSS. A compositionally biased stretch (acidic residues) spans 235–256; it reads ESIEEDDGNETDDEEDDDESEE. In terms of domain architecture, Protein kinase spans 274–528; the sequence is YQIIKTVGTG…ADDVKRHRWF (255 aa). Residues 280 to 288 and Lys303 contribute to the ATP site; that span reads VGTGTFGRV. Residue Asp397 is the Proton acceptor of the active site. The region spanning 529–583 is the AGC-kinase C-terminal domain; it reads KHLNWNDVYSKKLKPPILPDVHHDGDTKNFDDYPEKDWKPAKAVDQRDLQYFNDF.

It belongs to the protein kinase superfamily. AGC Ser/Thr protein kinase family. cAMP subfamily. Expressed in embryonic mesoderm, and the optic lamina, wing disk and leg disks of third instar larvae. More abundant in adult head than adult body.

It catalyses the reaction L-seryl-[protein] + ATP = O-phospho-L-seryl-[protein] + ADP + H(+). The catalysed reaction is L-threonyl-[protein] + ATP = O-phospho-L-threonyl-[protein] + ADP + H(+). Does not have an essential role in development. The chain is cAMP-dependent protein kinase catalytic subunit 3 (Pka-C3) from Drosophila melanogaster (Fruit fly).